Here is a 106-residue protein sequence, read N- to C-terminus: uncharacterized protein (106 aa).

The protein belongs to the HesB/IscA family.

This is an uncharacterized protein from Rhodobacter capsulatus (Rhodopseudomonas capsulata).